The primary structure comprises 22 residues: Lantibiotic mutacin B-Ny266 (22 aa).

The segment at residues 3-7 is a cross-link (lanthionine (Ser-Cys)); sequence SWSFC. Residue S5 is modified to 2,3-didehydroalanine (Ser). A cross-link (beta-methyllanthionine (Thr-Cys)) is located at residues 8–11; the sequence is TPGC. T14 bears the 2,3-didehydrobutyrine mark. A cross-link (lanthionine (Ser-Cys)) is located at residues 16-21; it reads SFNSYC. Positions 19–22 form a cross-link, S-(2-aminovinyl)-D-cysteine (Ser-Cys); sequence SYCC.

Post-translationally, maturation of lantibiotics involves the enzymatic conversion of Thr, and Ser into dehydrated AA and the formation of thioether bonds with cysteine. The C-terminal lanthionine undergoes decarboxylation. This is followed by membrane translocation and cleavage of the modified precursor. It is not established whether the 2,3-didehydrobutyrine is the E- or Z-isomer.

In terms of biological role, lanthionine-containing peptide antibiotic (lantibiotic) active on Gram-positive bacteria. The bactericidal activity of lantibiotics is based on depolarization of energized bacterial cytoplasmic membranes, initiated by the formation of aqueous transmembrane pores. The protein is Lantibiotic mutacin B-Ny266 of Streptococcus mutans.